Reading from the N-terminus, the 657-residue chain is Transcription factor 12 (657 aa).

Over residues 1–20 (MDEKGGTTSWGTSGQPSPSY) the composition is skewed to polar residues. Disordered stretches follow at residues 1–76 (MDEK…SGLS), 89–285 (LGSP…QTGD), 297–340 (PDHT…YENS), 459–555 (VSAQ…ERRM), and 628–657 (KVSA…MGHM). Residues 30–43 (HYSDHLNDSRKGTH) show a composition bias toward basic and acidic residues. 2 stretches are compositionally biased toward polar residues: residues 49-70 (TPFS…SLYS) and 93-112 (AQLS…SATS). Positions 68–89 (LYSRDSGLSGCQSSLLRQELGL) are leucine-zipper. Residues 130–136 (KKVRKVP) carry the Nuclear localization signal motif. Polar residues-rich tracts occupy residues 168-193 (MFAS…NGMS), 202-216 (GTST…SYGS), and 230-254 (VSPT…SSSP). Over residues 300–311 (TSSSFPSNPSTP) the composition is skewed to low complexity. The segment covering 312–340 (VGSPSPLTGASQWSRSGGQAPSSPNYENS) has biased composition (polar residues). Composition is skewed to basic and acidic residues over residues 493–505 (IKSE…ENIH), 511–526 (DDMK…DIKV), and 543–555 (PEQK…ERRM). In terms of domain architecture, bHLH spans 552-605 (ERRMANNARERLRVRDINEAFKELGRMCQLHLKSEKPQTKLLILHQAVAVILSL). Positions 607–630 (QQVRERNLNPKAACLKRREEEKVS) are class A specific domain. Residues 648–657 (SETTNPMGHM) are compositionally biased toward polar residues.

In terms of assembly, efficient DNA binding requires dimerization with another bHLH protein. Forms homo- or heterooligomers with myogenin, E12 and ITF2 proteins.

It is found in the nucleus. In terms of biological role, transcriptional regulator. Involved in the initiation of neuronal differentiation. Activates transcription by binding to the E box-containing promoter. This chain is Transcription factor 12 (TCF12), found in Gallus gallus (Chicken).